Reading from the N-terminus, the 163-residue chain is Nucleotide-binding protein BC_1159 (163 aa).

The protein belongs to the YajQ family.

Nucleotide-binding protein. In Bacillus cereus (strain ATCC 14579 / DSM 31 / CCUG 7414 / JCM 2152 / NBRC 15305 / NCIMB 9373 / NCTC 2599 / NRRL B-3711), this protein is Nucleotide-binding protein BC_1159.